The chain runs to 328 residues: Probable transcription factor At4g00610 (328 aa).

The disordered stretch occupies residues 31–143 (AKNKTLVTPS…ERAKTETETG (113 aa)). The span at 35 to 54 (TLVTPSTVKKSSDVASTSKK) shows a compositional bias: polar residues. Residues 84-108 (SEEEEEDEPSSDSESGSESESDTEA) are compositionally biased toward acidic residues. A compositionally biased stretch (basic and acidic residues) spans 122–143 (NEKRQSEGKPEEERAKTETETG).

Belongs to the GeBP family.

The polypeptide is Probable transcription factor At4g00610 (Arabidopsis thaliana (Mouse-ear cress)).